The primary structure comprises 212 residues: Cyclin-dependent kinase inhibitor 3 (212 aa).

A compositionally biased stretch (polar residues) spans 1–12 (MKPPSSIQTSEF). Residues 1–20 (MKPPSSIQTSEFDSSDEEPI) form a disordered region. Residues 1–34 (MKPPSSIQTSEFDSSDEEPIEDEQTPIHISWLSL) are interaction with CDK2. Residues 33 to 201 (SLSRVNCSQF…FRDKLAAHLS (169 aa)) enclose the Tyrosine-protein phosphatase domain. Residue cysteine 140 is the Phosphocysteine intermediate of the active site.

This sequence belongs to the protein-tyrosine phosphatase family. Interacts with cyclin-dependent kinases such as CDK1, CDK2 and CDK3. Does not interact with CDK4. Interacts (via C-terminus) with phosphorylated CDK2 (via C-terminal helix). Interacts with MS4A3 (via C-terminus); the interaction enhances CDKN3 enzymatic activity.

It is found in the cytoplasm. The protein localises to the perinuclear region. The catalysed reaction is O-phospho-L-tyrosyl-[protein] + H2O = L-tyrosyl-[protein] + phosphate. It catalyses the reaction O-phospho-L-threonyl-[protein] + H2O = L-threonyl-[protein] + phosphate. The enzyme catalyses O-phospho-L-seryl-[protein] + H2O = L-seryl-[protein] + phosphate. Functionally, may play a role in cell cycle regulation. Dual specificity CC phosphatase active toward substrates containing either phosphotyrosine or phosphoserine residues. Dephosphorylates CDK2 at 'Thr-160' in a cyclin-dependent manner. The chain is Cyclin-dependent kinase inhibitor 3 from Homo sapiens (Human).